A 130-amino-acid chain; its full sequence is D-ribose pyranase (130 aa).

The Proton donor role is filled by H20. Residues D28, H97, and 119 to 121 (YAN) contribute to the substrate site.

It belongs to the RbsD / FucU family. RbsD subfamily. In terms of assembly, homodecamer.

It localises to the cytoplasm. The catalysed reaction is beta-D-ribopyranose = beta-D-ribofuranose. It participates in carbohydrate metabolism; D-ribose degradation; D-ribose 5-phosphate from beta-D-ribopyranose: step 1/2. Its function is as follows. Catalyzes the interconversion of beta-pyran and beta-furan forms of D-ribose. This chain is D-ribose pyranase, found in Heliobacterium modesticaldum (strain ATCC 51547 / Ice1).